The following is a 74-amino-acid chain: Small cysteine-rich protein 8 (74 aa).

Positions 1–21 (MAAKFHLCLLLIILGTITVQG) are cleaved as a signal peptide. The propeptide occupies 22 to 31 (ARHPGKPHFF).

This sequence belongs to the Cnidaria small cysteine-rich protein (SCRiP) family. beta subfamily. Contains 4 disulfide bonds.

The protein localises to the secreted. Its subcellular location is the nematocyst. Its function is as follows. Induces neurotoxic symptoms on zebrafish. Has also been claimed to be implied in calcification, but tests on homolog proteins suggest that proteins of this family have a neurotoxic function and not a calcification function. The chain is Small cysteine-rich protein 8 from Orbicella faveolata (Mountainous star coral).